The sequence spans 131 residues: Transcription antitermination protein NusB (131 aa).

This sequence belongs to the NusB family.

Functionally, involved in transcription antitermination. Required for transcription of ribosomal RNA (rRNA) genes. Binds specifically to the boxA antiterminator sequence of the ribosomal RNA (rrn) operons. The sequence is that of Transcription antitermination protein NusB from Bacillus pumilus (strain SAFR-032).